The primary structure comprises 440 residues: Fibulin-7 (440 aa).

The N-terminal stretch at 1 to 24 (MGPGSQRALFLLLLLLASPGARAF) is a signal peptide. Positions 28–73 (LNKQQLLTTIRQLQQLLKGQETRFTEGIRNMKSRLAALQNTVNKMT) form a coiled coil. The 58-residue stretch at 79-136 (VSCPALEAPPDGKKFGSKYLVDHEVYFTCNPGFQLVGPSSVVCLANGSWTGEQPRCRD) folds into the Sushi domain. 11 disulfides stabilise this stretch: cysteine 81/cysteine 121, cysteine 107/cysteine 134, cysteine 140/cysteine 151, cysteine 145/cysteine 160, cysteine 162/cysteine 171, cysteine 229/cysteine 245, cysteine 241/cysteine 254, cysteine 256/cysteine 269, cysteine 275/cysteine 288, cysteine 282/cysteine 297, and cysteine 302/cysteine 319. An N-linked (GlcNAc...) asparagine glycan is attached at asparagine 124. Positions 136–172 (DISECSSQPCHNGGTCVEGINHYRCICPPGKTGNRCQ) constitute an EGF-like 1; calcium-binding domain. Positions 225–270 (DVNECEIYGQKGRPRLCMHACVNTPGSYRCTCPSGYRILADGKSCE) constitute an EGF-like 2; calcium-binding domain. The region spanning 271-320 (DVDECAGPQHMCPRGTTCINTGGGFQCVNPECPEGSGNISYVKTSPFQCE) is the EGF-like 3; calcium-binding domain. An N-linked (GlcNAc...) asparagine glycan is attached at asparagine 308.

This sequence belongs to the fibulin family. As to quaternary structure, interacts with heparin, FBLN1, FN1 and DSPP. Preferentially binds dental mesenchyme cells and odontoblasts but not dental epithelial cells or nondental cells. Binding requires a heparan sulfate-containing receptor on the cell surface as well as an integrin. N-glycosylated. As to expression, highly expressed in newborn incisors and molars. A weaker expression is seen in the brain, kidneys, muscles and bones.

The protein localises to the secreted. Its subcellular location is the extracellular space. It localises to the extracellular matrix. An adhesion molecule that interacts with extracellular matrix molecules in developing teeth and may play important roles in differentiation and maintenance of odontoblasts as well as in dentin formation. The chain is Fibulin-7 (Fbln7) from Mus musculus (Mouse).